The chain runs to 427 residues: Proteinase-activated receptor 1 (427 aa).

A signal peptide spans M1–S21. Residues A22–R41 constitute a propeptide, removed for receptor activation. The tract at residues R23–P87 is disordered. The N-linked (GlcNAc...) asparagine glycan is linked to N35. Residues S42 to T104 are Extracellular-facing. The span at P58–F68 shows a compositional bias: acidic residues. N-linked (GlcNAc...) asparagine glycosylation occurs at N77. The chain crosses the membrane as a helical span at residues V105–V130. Residues L131 to A139 are Cytoplasmic-facing. Residues V140 to F159 traverse the membrane as a helical segment. The Extracellular portion of the chain corresponds to K160–R178. C177 and C256 are joined by a disulfide. A helical transmembrane segment spans residues F179 to V200. The Cytoplasmic segment spans residues D201–R220. A helical transmembrane segment spans residues A221–L241. Residues Q242–S270 are Extracellular-facing. N252 and N261 each carry an N-linked (GlcNAc...) asparagine glycan. A helical transmembrane segment spans residues Y271–V290. Residues S291–A313 are Cytoplasmic-facing. The helical transmembrane segment at L314–L336 threads the bilayer. The Extracellular segment spans residues L337–A351. The chain crosses the membrane as a helical span at residues Y352 to A376. Residues S377–T427 are Cytoplasmic-facing. At S420 the chain carries Phosphoserine.

Belongs to the G-protein coupled receptor 1 family. Proteolytic cleavage by thrombin generates a new N-terminus that functions as a tethered ligand. Also proteolytically cleaved by cathepsin CTSG. In terms of processing, phosphorylated in the C-terminal tail; probably mediating desensitization prior to the uncoupling and internalization of the receptor.

Its subcellular location is the cell membrane. In terms of biological role, high affinity receptor that binds the activated thrombin, leading to calcium release from intracellular stores. The thrombin-activated receptor signaling pathway is mediated through PTX-insensitive G proteins, activation of phospholipase C resulting in the production of 1D-myo-inositol 1,4,5-trisphosphate (InsP3) which binds to InsP3 receptors causing calcium release from the stores. In astrocytes, the calcium released into the cytosol allows the Ca(2+)-dependent release of L-glutamate into the synaptic cleft through BEST1, that targets the neuronal postsynaptic GRIN2A/NMDAR receptor resulting in the synaptic plasticity regulation. May play a role in platelets activation and in vascular development. Mediates up-regulation of pro-inflammatory cytokines, such as MCP-1/CCL2 and IL6, triggered by coagulation factor Xa (F10) in cardiac fibroblasts and umbilical vein endothelial cells. The protein is Proteinase-activated receptor 1 of Bos taurus (Bovine).